The sequence spans 166 residues: Phosphopantetheine adenylyltransferase (166 aa).

A substrate-binding site is contributed by S11. Residues 11–12 and H19 each bind ATP; that span reads SF. Substrate contacts are provided by K43, V80, and R94. Residues 95–97, E105, and 130–136 each bind ATP; these read GLR and VRTVTAT.

Belongs to the bacterial CoaD family. Homohexamer. Requires Mg(2+) as cofactor.

The protein resides in the cytoplasm. The catalysed reaction is (R)-4'-phosphopantetheine + ATP + H(+) = 3'-dephospho-CoA + diphosphate. The protein operates within cofactor biosynthesis; coenzyme A biosynthesis; CoA from (R)-pantothenate: step 4/5. Functionally, reversibly transfers an adenylyl group from ATP to 4'-phosphopantetheine, yielding dephospho-CoA (dPCoA) and pyrophosphate. In Chelativorans sp. (strain BNC1), this protein is Phosphopantetheine adenylyltransferase.